The following is a 119-amino-acid chain: Phosphoribosyl-AMP cyclohydrolase (119 aa).

Asp-77 is a Mg(2+) binding site. Cys-78 contributes to the Zn(2+) binding site. 2 residues coordinate Mg(2+): Asp-79 and Asp-81. Residues Cys-94 and Cys-101 each coordinate Zn(2+).

Belongs to the PRA-CH family. In terms of assembly, homodimer. Requires Mg(2+) as cofactor. It depends on Zn(2+) as a cofactor.

Its subcellular location is the cytoplasm. The enzyme catalyses 1-(5-phospho-beta-D-ribosyl)-5'-AMP + H2O = 1-(5-phospho-beta-D-ribosyl)-5-[(5-phospho-beta-D-ribosylamino)methylideneamino]imidazole-4-carboxamide. It participates in amino-acid biosynthesis; L-histidine biosynthesis; L-histidine from 5-phospho-alpha-D-ribose 1-diphosphate: step 3/9. Catalyzes the hydrolysis of the adenine ring of phosphoribosyl-AMP. The chain is Phosphoribosyl-AMP cyclohydrolase from Cereibacter sphaeroides (strain ATCC 17025 / ATH 2.4.3) (Rhodobacter sphaeroides).